A 231-amino-acid chain; its full sequence is Large ribosomal subunit protein uL1 (231 aa).

Belongs to the universal ribosomal protein uL1 family. In terms of assembly, part of the 50S ribosomal subunit.

Binds directly to 23S rRNA. The L1 stalk is quite mobile in the ribosome, and is involved in E site tRNA release. Its function is as follows. Protein L1 is also a translational repressor protein, it controls the translation of the L11 operon by binding to its mRNA. The sequence is that of Large ribosomal subunit protein uL1 from Thioalkalivibrio sulfidiphilus (strain HL-EbGR7).